A 480-amino-acid polypeptide reads, in one-letter code: MVGGELVLAALVILLALLLTLVLSHFLPLLLNPKAPKGSFGWPLLGETLRFLSPHASNTLGSFLEDHCSRYGRVFKSHLFCTPTIVSCDQELNHFILQNEERLFQCSYPRPIHGILGKSSMLVVLGEDHKRLRNLALALVTSTKLKPSYLGDIEKIALHIVGSWHGKSKDKGMVNVIAFCEEARKFAFSVIVKQVLGLSPEEPVTAMILEDFLAFMKGLISFPLYIPGTPYAKAVQARARISSTVKGIIEERRNAGSSNKGDFLDVLLSSNELSDEEKVSFVLDSLLGGYETTSLLISMVVYFLGQSAQDLELVKREHEGIRSKKEKDEFLSSEDYKKMEYTQHVINEALRCGNIVKFVHRKALKDVRYKEYLIPSGWKVLPVFSAVHLNPLLHGNAQQFQPCRWEGASQGTSKKFTPFGGGPRLCPGSELAKVEAAFFLHHLVLNYRWRIDGDDIPMAYPYVEFQRGLPIEIEPLCSES.

A helical membrane pass occupies residues 6-26 (LVLAALVILLALLLTLVLSHF). Cys-426 is a heme binding site.

Belongs to the cytochrome P450 family. Heme is required as a cofactor. As to expression, ubiquitously expressed at low levels, but preferentially in the internodes and the florets before flowering.

The protein localises to the membrane. It carries out the reaction campesterol + reduced [NADPH--hemoprotein reductase] + O2 = (22S)-22-hydroxycampesterol + oxidized [NADPH--hemoprotein reductase] + H2O + H(+). It participates in plant hormone biosynthesis; brassinosteroid biosynthesis. Functionally, involved in brassinosteroid biosynthesis. May catalyze a C6-oxidation step and may be involved to supply 6-deoxotyphasterol and typhasterol. Involved in internode elongation and seed development. Catalyzes the conversion of campesterol (CR) to (22S)-22-hydroxycampesterol (22-OHCR, 22-hydroxyCR). The chain is Cytochrome P450 724B1 from Oryza sativa subsp. japonica (Rice).